The sequence spans 99 residues: Nucleoid-associated protein EbfC (99 aa).

The protein belongs to the YbaB/EbfC family. In terms of assembly, homodimer.

It localises to the cytoplasm. Its subcellular location is the nucleoid. Functionally, binds to DNA and alters its conformation. May be involved in regulation of gene expression, nucleoid organization and DNA protection. This Borreliella afzelii (strain PKo) (Borrelia afzelii) protein is Nucleoid-associated protein EbfC.